Reading from the N-terminus, the 232-residue chain is MAKLGKRTRAAREAVAGKSDLTVEEAVALIKANATSKFDETVEIAMCLGVDPRHADQMVRGVVSLPNGTGKTVRVAVFARGPKAEEAQAAGADIVGAEDLMETIQSGKIEFDRCIATPDMMPIVGRLGKILGPRNLMPNPKVGTVTMDVKAAVEAAKGGEVQFKAEKAGVVHAGVGKASFDEAKLVENVRAFVDAVSKAKPSGAKGSYMKKIALSSTMGPGVTVAVDSATGN.

This sequence belongs to the universal ribosomal protein uL1 family. Part of the 50S ribosomal subunit.

Binds directly to 23S rRNA. The L1 stalk is quite mobile in the ribosome, and is involved in E site tRNA release. Functionally, protein L1 is also a translational repressor protein, it controls the translation of the L11 operon by binding to its mRNA. This chain is Large ribosomal subunit protein uL1, found in Dinoroseobacter shibae (strain DSM 16493 / NCIMB 14021 / DFL 12).